The following is a 426-amino-acid chain: MFVNLTCLSEGNGSRGKALAESTQAELKTSWYLLGPAFVAAIAYVDPGNVAANVSSGAQFGYLQLWVVVVANVLAGLVQYLSAKLGLVTGQSLPQAISKQMSHPFRLGFWLQAELVAMATDVAEIVGGAIAFHILFRVSLLLGGVITGTVSLLLLMVKDRRGQLLFERVITGLLFVIVVGFTSSFFVATPSPEDMVNGLLPRFQGTESVLLAAAIIGATVMPHAVYLHSGLALDRHGHPHAGRSRRRLLRVTRLDVILAMTIAGIVNTAMLLVAAINLQHHQVTAYIEGTYTAIQDTLGATIAMLFAIGLLASSLASASVGAYAGALIMQGLLQRSIPMLIRRLITLCPAIAILALGFDPTRALVLSQIVLSFGIPFAVLPLVKLTNNRGLMGNDTNHPATTVLGWAVAILVSLLNVVLIYLTVTS.

Helical transmembrane passes span Trp31 to Ala51, Ala58 to Val78, Ile134 to Met156, Val169 to Thr189, Ser208 to His228, Val256 to Ile276, Leu298 to Ala318, Ile337 to Gly357, Ala363 to Val383, and Thr402 to Leu422.

It belongs to the NRAMP family.

It localises to the cell membrane. Functionally, h(+)-stimulated, divalent metal cation uptake system. This is Divalent metal cation transporter MntH from Mycobacterium leprae (strain TN).